A 690-amino-acid polypeptide reads, in one-letter code: Elongation factor G (690 aa).

The region spanning 8-283 (ERYRNFGIMA…AVVDFMPSPL (276 aa)) is the tr-type G domain. GTP-binding positions include 17 to 24 (AHIDAGKT), 81 to 85 (DTPGH), and 135 to 138 (NKLD).

It belongs to the TRAFAC class translation factor GTPase superfamily. Classic translation factor GTPase family. EF-G/EF-2 subfamily.

The protein localises to the cytoplasm. Catalyzes the GTP-dependent ribosomal translocation step during translation elongation. During this step, the ribosome changes from the pre-translocational (PRE) to the post-translocational (POST) state as the newly formed A-site-bound peptidyl-tRNA and P-site-bound deacylated tRNA move to the P and E sites, respectively. Catalyzes the coordinated movement of the two tRNA molecules, the mRNA and conformational changes in the ribosome. In Novosphingobium aromaticivorans (strain ATCC 700278 / DSM 12444 / CCUG 56034 / CIP 105152 / NBRC 16084 / F199), this protein is Elongation factor G.